Consider the following 577-residue polypeptide: Proline--tRNA ligase (577 aa).

It belongs to the class-II aminoacyl-tRNA synthetase family. ProS type 1 subfamily. In terms of assembly, homodimer.

Its subcellular location is the cytoplasm. The catalysed reaction is tRNA(Pro) + L-proline + ATP = L-prolyl-tRNA(Pro) + AMP + diphosphate. Catalyzes the attachment of proline to tRNA(Pro) in a two-step reaction: proline is first activated by ATP to form Pro-AMP and then transferred to the acceptor end of tRNA(Pro). As ProRS can inadvertently accommodate and process non-cognate amino acids such as alanine and cysteine, to avoid such errors it has two additional distinct editing activities against alanine. One activity is designated as 'pretransfer' editing and involves the tRNA(Pro)-independent hydrolysis of activated Ala-AMP. The other activity is designated 'posttransfer' editing and involves deacylation of mischarged Ala-tRNA(Pro). The misacylated Cys-tRNA(Pro) is not edited by ProRS. This is Proline--tRNA ligase from Helicobacter pylori (strain ATCC 700392 / 26695) (Campylobacter pylori).